Consider the following 253-residue polypeptide: 5'/3'-nucleotidase SurE (253 aa).

Residues D8, D9, S39, and N92 each contribute to the a divalent metal cation site.

The protein belongs to the SurE nucleotidase family. A divalent metal cation serves as cofactor.

Its subcellular location is the cytoplasm. The enzyme catalyses a ribonucleoside 5'-phosphate + H2O = a ribonucleoside + phosphate. It catalyses the reaction a ribonucleoside 3'-phosphate + H2O = a ribonucleoside + phosphate. The catalysed reaction is [phosphate](n) + H2O = [phosphate](n-1) + phosphate + H(+). In terms of biological role, nucleotidase with a broad substrate specificity as it can dephosphorylate various ribo- and deoxyribonucleoside 5'-monophosphates and ribonucleoside 3'-monophosphates with highest affinity to 3'-AMP. Also hydrolyzes polyphosphate (exopolyphosphatase activity) with the preference for short-chain-length substrates (P20-25). Might be involved in the regulation of dNTP and NTP pools, and in the turnover of 3'-mononucleotides produced by numerous intracellular RNases (T1, T2, and F) during the degradation of various RNAs. The polypeptide is 5'/3'-nucleotidase SurE (Serratia proteamaculans (strain 568)).